Consider the following 103-residue polypeptide: Large ribosomal subunit protein bL21 (103 aa).

This sequence belongs to the bacterial ribosomal protein bL21 family. In terms of assembly, part of the 50S ribosomal subunit. Contacts protein L20.

Its function is as follows. This protein binds to 23S rRNA in the presence of protein L20. This Bordetella petrii (strain ATCC BAA-461 / DSM 12804 / CCUG 43448) protein is Large ribosomal subunit protein bL21.